The sequence spans 459 residues: ATP synthase subunit beta (459 aa).

Residue 149 to 156 (GGAGVGKT) participates in ATP binding.

It belongs to the ATPase alpha/beta chains family. In terms of assembly, F-type ATPases have 2 components, CF(1) - the catalytic core - and CF(0) - the membrane proton channel. CF(1) has five subunits: alpha(3), beta(3), gamma(1), delta(1), epsilon(1). CF(0) has three main subunits: a(1), b(2) and c(9-12). The alpha and beta chains form an alternating ring which encloses part of the gamma chain. CF(1) is attached to CF(0) by a central stalk formed by the gamma and epsilon chains, while a peripheral stalk is formed by the delta and b chains.

The protein localises to the cell inner membrane. The catalysed reaction is ATP + H2O + 4 H(+)(in) = ADP + phosphate + 5 H(+)(out). In terms of biological role, produces ATP from ADP in the presence of a proton gradient across the membrane. The catalytic sites are hosted primarily by the beta subunits. In Pseudomonas syringae pv. tomato (strain ATCC BAA-871 / DC3000), this protein is ATP synthase subunit beta.